Consider the following 201-residue polypeptide: IMP cyclohydrolase (201 aa).

Belongs to the archaeal IMP cyclohydrolase family.

It catalyses the reaction IMP + H2O = 5-formamido-1-(5-phospho-D-ribosyl)imidazole-4-carboxamide. Its pathway is purine metabolism; IMP biosynthesis via de novo pathway; IMP from 5-formamido-1-(5-phospho-D-ribosyl)imidazole-4-carboxamide: step 1/1. Catalyzes the cyclization of 5-formylamidoimidazole-4-carboxamide ribonucleotide to IMP. This Methanococcus maripaludis (strain DSM 14266 / JCM 13030 / NBRC 101832 / S2 / LL) protein is IMP cyclohydrolase.